A 188-amino-acid polypeptide reads, in one-letter code: UPF0398 protein SE_1135 (188 aa).

This sequence belongs to the UPF0398 family.

This chain is UPF0398 protein SE_1135, found in Staphylococcus epidermidis (strain ATCC 12228 / FDA PCI 1200).